The sequence spans 816 residues: Oxysterol-binding protein-related protein 1D (816 aa).

The region spanning 92–229 (GAGVAGIMYK…WVEAFQVAKD (138 aa)) is the PH domain. A coiled-coil region spans residues 290-321 (KHIILLDTLRQLETEKIELEATVVDETKEHDS). Residues 340–362 (SASDSEADNESQDGADVESDEDD) form a disordered region. Over residues 344–362 (SEADNESQDGADVESDEDD) the composition is skewed to acidic residues. The stretch at 735-764 (NGEYESANAEKLRLEQLQRQARRLQEKGWK) forms a coiled coil.

It belongs to the OSBP family. Expressed in roots, leaves, stems and flowers.

In terms of biological role, may be involved in the transport of sterols. This chain is Oxysterol-binding protein-related protein 1D (ORP1D), found in Arabidopsis thaliana (Mouse-ear cress).